A 363-amino-acid chain; its full sequence is dTDP-3-amino-3,6-dideoxy-alpha-D-galactopyranose transaminase (363 aa).

The residue at position 185 (Lys-185) is an N6-(pyridoxal phosphate)lysine.

The protein belongs to the DegT/DnrJ/EryC1 family. The cofactor is pyridoxal 5'-phosphate.

It carries out the reaction dTDP-3-amino-3,6-dideoxy-alpha-D-galactopyranose + 2-oxoglutarate = dTDP-3-dehydro-6-deoxy-alpha-D-galactose + L-glutamate. In terms of biological role, specifically aminates dTDP-6-deoxy-D-xylohex-3-ulose to form dTDP-D-Fucp3N in the biosynthesis of dTDP-3-acetamido-3,6-dideoxy-alpha-D-galactose, a glycan chain of the S-layer. This chain is dTDP-3-amino-3,6-dideoxy-alpha-D-galactopyranose transaminase (fdtB), found in Aneurinibacillus thermoaerophilus.